The sequence spans 341 residues: Methionine import ATP-binding protein MetN 1 (341 aa).

An ABC transporter domain is found at 2–241; it reads IEFRQVSKSF…PKTTIAQNFV (240 aa). 38–45 is a binding site for ATP; it reads GYSGAGKS.

This sequence belongs to the ABC transporter superfamily. Methionine importer (TC 3.A.1.24) family. The complex is composed of two ATP-binding proteins (MetN), two transmembrane proteins (MetI) and a solute-binding protein (MetQ).

It localises to the cell membrane. It carries out the reaction L-methionine(out) + ATP + H2O = L-methionine(in) + ADP + phosphate + H(+). It catalyses the reaction D-methionine(out) + ATP + H2O = D-methionine(in) + ADP + phosphate + H(+). Part of the ABC transporter complex MetNIQ involved in methionine import. Responsible for energy coupling to the transport system. The polypeptide is Methionine import ATP-binding protein MetN 1 (Staphylococcus aureus (strain bovine RF122 / ET3-1)).